The sequence spans 118 residues: Putative pterin-4-alpha-carbinolamine dehydratase (118 aa).

It belongs to the pterin-4-alpha-carbinolamine dehydratase family.

The catalysed reaction is (4aS,6R)-4a-hydroxy-L-erythro-5,6,7,8-tetrahydrobiopterin = (6R)-L-erythro-6,7-dihydrobiopterin + H2O. The polypeptide is Putative pterin-4-alpha-carbinolamine dehydratase (Pseudomonas entomophila (strain L48)).